We begin with the raw amino-acid sequence, 343 residues long: ATP-dependent 6-phosphofructokinase (343 aa).

ATP contacts are provided by residues G10, 73 to 74, and 103 to 106; these read RV and GEGT. E104 contributes to the Mg(2+) binding site. Substrate contacts are provided by residues 126 to 128, R163, 170 to 172, E223, R267, and 273 to 276; these read TID, MGR, and HIQR. The Proton acceptor role is filled by D128.

Belongs to the phosphofructokinase type A (PFKA) family. Mixed-substrate PFK group III subfamily. Homodimer or homotetramer. Mg(2+) serves as cofactor.

Its subcellular location is the cytoplasm. The enzyme catalyses beta-D-fructose 6-phosphate + ATP = beta-D-fructose 1,6-bisphosphate + ADP + H(+). It catalyses the reaction D-tagatofuranose 6-phosphate + ATP = D-tagatofuranose 1,6-bisphosphate + ADP + H(+). It functions in the pathway carbohydrate degradation; glycolysis; D-glyceraldehyde 3-phosphate and glycerone phosphate from D-glucose: step 3/4. Its function is as follows. Catalyzes the phosphorylation of D-fructose 6-phosphate to fructose 1,6-bisphosphate by ATP, the first committing step of glycolysis. Can also catalyze the phosphorylation of tagatose-6-phosphate. In Mycobacterium tuberculosis (strain CDC 1551 / Oshkosh), this protein is ATP-dependent 6-phosphofructokinase.